Here is a 254-residue protein sequence, read N- to C-terminus: 21S rRNA pseudouridine(2819) synthase (254 aa).

Asp71 is a catalytic residue.

Belongs to the pseudouridine synthase RluA family.

The protein localises to the mitochondrion. It catalyses the reaction uridine(2819) in 21S rRNA = pseudouridine(2819) in 21S rRNA. Its function is as follows. Pseudouridylate synthase responsible for the pseudouridine-2819 formation in mitochondrial 21S rRNA. May modulate the efficiency or the fidelity of the mitochondrial translation machinery. The sequence is that of 21S rRNA pseudouridine(2819) synthase (PUS5) from Saccharomyces cerevisiae (strain ATCC 204508 / S288c) (Baker's yeast).